Consider the following 103-residue polypeptide: MAHYKAADSKREQFRRYLEKSGVLDTLTKVLVALYEEPEKPNSALDFLKHHLGAATPENPEIELLRLELAEMKEKYEAIVEENKKLKAKLAQYEPPQEEKRAE.

The protein belongs to the AMY1 family. Binds via its C-terminal region to the N-terminal region of MYC. Associates with AKAP1/S-AKAP84. Interacts with MYCBPAP. Interacts with CFAP91. In terms of tissue distribution, highly expressed in heart, placenta, pancreas, skeletal muscle and kidney. Also present at low levels in lung.

Its subcellular location is the cytoplasm. The protein resides in the nucleus. The protein localises to the mitochondrion. Its function is as follows. May control the transcriptional activity of MYC. Stimulates the activation of E box-dependent transcription by MYC. The protein is c-Myc-binding protein of Homo sapiens (Human).